A 503-amino-acid polypeptide reads, in one-letter code: Probable cytosol aminopeptidase (503 aa).

2 residues coordinate Mn(2+): K274 and D279. The active site involves K286. The Mn(2+) site is built by D297, D356, and E358. Residue R360 is part of the active site.

It belongs to the peptidase M17 family. Mn(2+) is required as a cofactor.

It is found in the cytoplasm. The catalysed reaction is Release of an N-terminal amino acid, Xaa-|-Yaa-, in which Xaa is preferably Leu, but may be other amino acids including Pro although not Arg or Lys, and Yaa may be Pro. Amino acid amides and methyl esters are also readily hydrolyzed, but rates on arylamides are exceedingly low.. It catalyses the reaction Release of an N-terminal amino acid, preferentially leucine, but not glutamic or aspartic acids.. Functionally, presumably involved in the processing and regular turnover of intracellular proteins. Catalyzes the removal of unsubstituted N-terminal amino acids from various peptides. The protein is Probable cytosol aminopeptidase of Burkholderia ambifaria (strain ATCC BAA-244 / DSM 16087 / CCUG 44356 / LMG 19182 / AMMD) (Burkholderia cepacia (strain AMMD)).